The sequence spans 243 residues: Small ribosomal subunit protein uS3 (243 aa).

In terms of domain architecture, KH type-2 spans 39–107; the sequence is IRAYLIKELK…ETHLNIVEVR (69 aa). A disordered region spans residues 214-243; the sequence is ASERRGLEGDAQGPASRERGDRPDRRRENA. Residues 229 to 243 are compositionally biased toward basic and acidic residues; the sequence is SRERGDRPDRRRENA.

The protein belongs to the universal ribosomal protein uS3 family. As to quaternary structure, part of the 30S ribosomal subunit. Forms a tight complex with proteins S10 and S14.

Binds the lower part of the 30S subunit head. Binds mRNA in the 70S ribosome, positioning it for translation. The polypeptide is Small ribosomal subunit protein uS3 (Agrobacterium fabrum (strain C58 / ATCC 33970) (Agrobacterium tumefaciens (strain C58))).